The primary structure comprises 380 residues: 4-hydroxy-3-methylbut-2-en-1-yl diphosphate synthase (flavodoxin) (380 aa).

[4Fe-4S] cluster contacts are provided by Cys-275, Cys-278, Cys-310, and Glu-317.

Belongs to the IspG family. Requires [4Fe-4S] cluster as cofactor.

It carries out the reaction (2E)-4-hydroxy-3-methylbut-2-enyl diphosphate + oxidized [flavodoxin] + H2O + 2 H(+) = 2-C-methyl-D-erythritol 2,4-cyclic diphosphate + reduced [flavodoxin]. Its pathway is isoprenoid biosynthesis; isopentenyl diphosphate biosynthesis via DXP pathway; isopentenyl diphosphate from 1-deoxy-D-xylulose 5-phosphate: step 5/6. Its function is as follows. Converts 2C-methyl-D-erythritol 2,4-cyclodiphosphate (ME-2,4cPP) into 1-hydroxy-2-methyl-2-(E)-butenyl 4-diphosphate. This Hyphomonas neptunium (strain ATCC 15444) protein is 4-hydroxy-3-methylbut-2-en-1-yl diphosphate synthase (flavodoxin).